We begin with the raw amino-acid sequence, 53 residues long: Conotoxin Cal9.2f (53 aa).

Residues 1–6 (KKGVTL) constitute a propeptide that is removed on maturation. 3 disulfide bridges follow: Cys15-Cys32, Cys20-Cys42, and Cys22-Cys47.

As to expression, expressed by the venom duct.

It localises to the secreted. Its function is as follows. Probable neurotoxin with unknown target. Possibly targets ion channels. This chain is Conotoxin Cal9.2f, found in Californiconus californicus (California cone).